The sequence spans 276 residues: NH(3)-dependent NAD(+) synthetase (276 aa).

Position 43–50 (43–50 (GISGGVDS)) interacts with ATP. Aspartate 49 lines the Mg(2+) pocket. Arginine 146 contributes to the deamido-NAD(+) binding site. Threonine 166 is a binding site for ATP. Glutamate 171 lines the Mg(2+) pocket. Residues lysine 179 and aspartate 186 each contribute to the deamido-NAD(+) site. 2 residues coordinate ATP: lysine 195 and threonine 217. Position 266–267 (266–267 (HK)) interacts with deamido-NAD(+).

This sequence belongs to the NAD synthetase family. As to quaternary structure, homodimer.

It catalyses the reaction deamido-NAD(+) + NH4(+) + ATP = AMP + diphosphate + NAD(+) + H(+). Its pathway is cofactor biosynthesis; NAD(+) biosynthesis; NAD(+) from deamido-NAD(+) (ammonia route): step 1/1. Catalyzes the ATP-dependent amidation of deamido-NAD to form NAD. Uses ammonia as a nitrogen source. The protein is NH(3)-dependent NAD(+) synthetase of Shewanella amazonensis (strain ATCC BAA-1098 / SB2B).